An 83-amino-acid polypeptide reads, in one-letter code: Protein CASPARIAN STRIP INTEGRITY FACTOR 2 (83 aa).

The signal sequence occupies residues 1–28 (MGLLPLVKKLGFIIFLLVSASAFALCSA). Residues 61–83 (SRDYGHSSPKPKLVRPPFKLIPN) are disordered. At tyrosine 64 the chain carries Sulfotyrosine. Hydroxyproline is present on residues proline 69 and proline 71.

Interacts with the specific receptor kinases GSO1 and GSO2. Expressed exclusively in the root stele.

Peptide hormone required for contiguous Casparian strip diffusion barrier formation in roots via the regulation of CASPs protein expression and distribution in a GSO1-GSO2 signaling pathway. The Casparian strip is required for ion homeostasis (e.g. iron and potassium ions). The protein is Protein CASPARIAN STRIP INTEGRITY FACTOR 2 of Arabidopsis thaliana (Mouse-ear cress).